An 89-amino-acid chain; its full sequence is MSWSVEKKREIISTFGRNVKDTGSTEVQVALLTERIDHLKHHFLKHKKDHHSRRGLLKMVAHRRRLLKYLKENNMLHYTNLIRNLGLRH.

Belongs to the universal ribosomal protein uS15 family. As to quaternary structure, part of the 30S ribosomal subunit. Forms a bridge to the 50S subunit in the 70S ribosome, contacting the 23S rRNA.

Its function is as follows. One of the primary rRNA binding proteins, it binds directly to 16S rRNA where it helps nucleate assembly of the platform of the 30S subunit by binding and bridging several RNA helices of the 16S rRNA. Forms an intersubunit bridge (bridge B4) with the 23S rRNA of the 50S subunit in the ribosome. The chain is Small ribosomal subunit protein uS15 from Blochmanniella pennsylvanica (strain BPEN).